The following is a 329-amino-acid chain: 4-hydroxythreonine-4-phosphate dehydrogenase (329 aa).

Substrate is bound by residues histidine 136 and threonine 137. 3 residues coordinate a divalent metal cation: histidine 166, histidine 211, and histidine 266. Residues lysine 274, asparagine 283, and arginine 292 each contribute to the substrate site.

Belongs to the PdxA family. As to quaternary structure, homodimer. The cofactor is Zn(2+). Requires Mg(2+) as cofactor. It depends on Co(2+) as a cofactor.

Its subcellular location is the cytoplasm. It catalyses the reaction 4-(phosphooxy)-L-threonine + NAD(+) = 3-amino-2-oxopropyl phosphate + CO2 + NADH. The protein operates within cofactor biosynthesis; pyridoxine 5'-phosphate biosynthesis; pyridoxine 5'-phosphate from D-erythrose 4-phosphate: step 4/5. In terms of biological role, catalyzes the NAD(P)-dependent oxidation of 4-(phosphooxy)-L-threonine (HTP) into 2-amino-3-oxo-4-(phosphooxy)butyric acid which spontaneously decarboxylates to form 3-amino-2-oxopropyl phosphate (AHAP). The protein is 4-hydroxythreonine-4-phosphate dehydrogenase of Escherichia coli (strain SE11).